Here is an 87-residue protein sequence, read N- to C-terminus: U3-theraphotoxin-Hhn1q (87 aa).

A signal peptide spans 1-24; that stretch reads MVNMKASMFLTFAGLVLLFVVCYA. A propeptide spanning residues 25–52 is cleaved from the precursor; that stretch reads SESEEKEFPKEMLSSIFAVDNDFKQEER. Disulfide bonds link Cys54–Cys67, Cys61–Cys72, and Cys66–Cys79.

It belongs to the neurotoxin 10 (Hwtx-1) family. 51 (Hntx-8) subfamily. Hntx-8 sub-subfamily. In terms of tissue distribution, expressed by the venom gland.

The protein localises to the secreted. Its function is as follows. Ion channel inhibitor. The chain is U3-theraphotoxin-Hhn1q from Cyriopagopus hainanus (Chinese bird spider).